The sequence spans 161 residues: 3-isopropylmalate dehydratase small subunit 1 (161 aa).

It belongs to the LeuD family. LeuD type 2 subfamily. Heterodimer of LeuC and LeuD.

The catalysed reaction is (2R,3S)-3-isopropylmalate = (2S)-2-isopropylmalate. It functions in the pathway amino-acid biosynthesis; L-leucine biosynthesis; L-leucine from 3-methyl-2-oxobutanoate: step 2/4. Its function is as follows. Catalyzes the isomerization between 2-isopropylmalate and 3-isopropylmalate, via the formation of 2-isopropylmaleate. The polypeptide is 3-isopropylmalate dehydratase small subunit 1 (leuD1) (Archaeoglobus fulgidus (strain ATCC 49558 / DSM 4304 / JCM 9628 / NBRC 100126 / VC-16)).